A 292-amino-acid chain; its full sequence is ATP phosphoribosyltransferase (292 aa).

The protein belongs to the ATP phosphoribosyltransferase family. Long subfamily. It depends on Mg(2+) as a cofactor.

It localises to the cytoplasm. It carries out the reaction 1-(5-phospho-beta-D-ribosyl)-ATP + diphosphate = 5-phospho-alpha-D-ribose 1-diphosphate + ATP. It functions in the pathway amino-acid biosynthesis; L-histidine biosynthesis; L-histidine from 5-phospho-alpha-D-ribose 1-diphosphate: step 1/9. Its activity is regulated as follows. Feedback inhibited by histidine. Functionally, catalyzes the condensation of ATP and 5-phosphoribose 1-diphosphate to form N'-(5'-phosphoribosyl)-ATP (PR-ATP). Has a crucial role in the pathway because the rate of histidine biosynthesis seems to be controlled primarily by regulation of HisG enzymatic activity. This chain is ATP phosphoribosyltransferase, found in Thermodesulfovibrio yellowstonii (strain ATCC 51303 / DSM 11347 / YP87).